Here is a 155-residue protein sequence, read N- to C-terminus: Ribosomal RNA large subunit methyltransferase H 1 (155 aa).

Residues L76, G108, and 127-132 (FSKMTF) each bind S-adenosyl-L-methionine.

Belongs to the RNA methyltransferase RlmH family. In terms of assembly, homodimer.

It is found in the cytoplasm. It carries out the reaction pseudouridine(1915) in 23S rRNA + S-adenosyl-L-methionine = N(3)-methylpseudouridine(1915) in 23S rRNA + S-adenosyl-L-homocysteine + H(+). Its function is as follows. Specifically methylates the pseudouridine at position 1915 (m3Psi1915) in 23S rRNA. The polypeptide is Ribosomal RNA large subunit methyltransferase H 1 (Thermoanaerobacter pseudethanolicus (strain ATCC 33223 / 39E) (Clostridium thermohydrosulfuricum)).